A 517-amino-acid polypeptide reads, in one-letter code: Probable mannosyltransferase KTR7 (517 aa).

The Cytoplasmic segment spans residues 1–23; sequence MAIRLNPKVRRFLLDKCRQKRYG. Residues 24–44 traverse the membrane as a helical; Signal-anchor for type II membrane protein segment; that stretch reads FLFLGCIFAILYCMGTWPFFA. The stem region stretch occupies residues 45–85; it reads KDIVHDPNNLPYSLQDYSTDKDEPFFRGCTDTKLYLQNPAY. Residues 45–517 are Lumenal-facing; the sequence is KDIVHDPNNL…IRRENFRVIE (473 aa). Residues 86–517 form a catalytic region; the sequence is SKMNASFVML…IRRENFRVIE (432 aa). Asparagine 89 and asparagine 144 each carry an N-linked (GlcNAc...) asparagine glycan. Catalysis depends on glutamate 367, which acts as the Nucleophile.

It belongs to the glycosyltransferase 15 family.

Its subcellular location is the membrane. Its function is as follows. Possible glycosyltransferase that transfers an alpha-D-mannosyl residue from GDP-mannose into lipid-linked oligosaccharide, forming an alpha-(1-&gt;2)-D-mannosyl-D-mannose linkage. This Saccharomyces cerevisiae (strain ATCC 204508 / S288c) (Baker's yeast) protein is Probable mannosyltransferase KTR7 (KTR7).